Here is a 314-residue protein sequence, read N- to C-terminus: Taste receptor type 2 member 42 (314 aa).

The Extracellular segment spans residues 1-7; sequence MATELDK. Residues 8–28 traverse the membrane as a helical segment; sequence IFLILEIAEFIIGMLGNVFIG. At 29–50 the chain is on the cytoplasmic side; that stretch reads LVNCSEGIKNQKVFSADFILTC. A helical membrane pass occupies residues 51-71; the sequence is LAISTIGQLFVILFDSFLVGL. Over 72-101 the chain is Extracellular; it reads ASHLYTTYRLGKPVIMLWHMTNHLTTWLAT. A helical membrane pass occupies residues 102 to 122; sequence CLSIFYFFKIAHFPHSLFLWL. The Cytoplasmic portion of the chain corresponds to 123-127; it reads RWRMN. A helical transmembrane segment spans residues 128 to 148; the sequence is GMIVMLLILSLFLLIFNSLVL. The Extracellular segment spans residues 149–187; it reads EIFIDISLNIIDKSNLTLYLDESKTVYDKLSILKTLLSL. Residue Asn163 is glycosylated (N-linked (GlcNAc...) asparagine). Residues 188 to 208 traverse the membrane as a helical segment; the sequence is TSFIPFSLSLTSLLFLFLSLV. At 209–238 the chain is on the cytoplasmic side; it reads RHTRNLKLSSLGSRDSSTEAHRRAMKMVMS. The chain crosses the membrane as a helical span at residues 239 to 259; that stretch reads FLFLFIVHFFSLQVANWIFFM. Over 260–265 the chain is Extracellular; that stretch reads LWNNKY. A helical transmembrane segment spans residues 266–286; that stretch reads IKFAMLALNAFPSCHSFILIL. Topologically, residues 287-314 are cytoplasmic; the sequence is GNSKLRQTAVRLLWHLRNYTKTPNPLPL.

Belongs to the G-protein coupled receptor T2R family.

Its subcellular location is the membrane. In terms of biological role, receptor that may play a role in the perception of bitterness and is gustducin-linked. May play a role in sensing the chemical composition of the gastrointestinal content. The activity of this receptor may stimulate alpha gustducin, mediate PLC-beta-2 activation and lead to the gating of TRPM5. This chain is Taste receptor type 2 member 42 (TAS2R42), found in Pan troglodytes (Chimpanzee).